We begin with the raw amino-acid sequence, 325 residues long: Neural proliferation differentiation and control protein 1 (325 aa).

Positions 1 to 34 (MATPLPPPSPRHLRLLRLLLSGLVLGAALRGAAA) are cleaved as a signal peptide. Residues 138–175 (QGLELGLPSTPGTPTPTPHTSLGSPVSSDPVHMSPLEP) are disordered. The chain crosses the membrane as a helical span at residues 182–202 (GLALVLILAFCVAGAAALSVA). A Phosphoserine modification is found at S229. A disordered region spans residues 266–290 (EPPKELDTASSDEENEDGDFTVYEC). Residues 275–284 (SSDEENEDGD) show a composition bias toward acidic residues.

It belongs to the NPDC1/cab-1 family. As to expression, strongly expressed in adult brain; especially in hippocampus, frontal lobe and temporal lobe.

The protein localises to the membrane. Functionally, suppresses oncogenic transformation in neural and non-neural cells and down-regulates neural cell proliferation. Might be involved in transcriptional regulation. This is Neural proliferation differentiation and control protein 1 (NPDC1) from Homo sapiens (Human).